The primary structure comprises 481 residues: Aromatic amino acid aminotransferase C1773.13 (481 aa).

It belongs to the class-I pyridoxal-phosphate-dependent aminotransferase family. The cofactor is pyridoxal 5'-phosphate.

The protein localises to the cytoplasm. The catalysed reaction is an aromatic L-alpha-amino acid + 2-oxoglutarate = an aromatic oxo-acid + L-glutamate. Its function is as follows. Has aromatic amino acid transaminase activity. The polypeptide is Aromatic amino acid aminotransferase C1773.13 (Schizosaccharomyces pombe (strain 972 / ATCC 24843) (Fission yeast)).